A 466-amino-acid chain; its full sequence is Glycine--tRNA ligase (466 aa).

Arg105 and Glu168 together coordinate substrate. ATP is bound by residues 200–202 (RNE), 210–215 (FRTREF), 287–288 (EL), and 331–334 (GLTR). 215–219 (FEQME) contacts substrate. Residue 327 to 331 (EPAAG) coordinates substrate.

Belongs to the class-II aminoacyl-tRNA synthetase family. As to quaternary structure, homodimer.

Its subcellular location is the cytoplasm. It carries out the reaction tRNA(Gly) + glycine + ATP = glycyl-tRNA(Gly) + AMP + diphosphate. In terms of biological role, catalyzes the attachment of glycine to tRNA(Gly). This chain is Glycine--tRNA ligase, found in Nocardia farcinica (strain IFM 10152).